The primary structure comprises 471 residues: MAKKYDAGVKDYRETYWMPDYTPKETDLLACFKIIPQPGVPREEARAAVAAESSTGTWTTVWTDLLTDLDHYKGRAYAIEDVPGDEEAFYAFIAYPIDLFEEGSVVNVFTSLVGNVFGFKAIRALRLEDVRFPIAYVMTCNGPPHGIQVERDIMNKYGRPLLGCTIKPKLGLSAKNYGRAVYECLRGGLDFTKDDENVNSQPFMRWRHGFDFVMEAIEKAERETGERKGHYLNVTAPTPDEMFKRAEYAKEIGAPIIMHDYITGGFTANTGLAQWCRDNGVLLHIHRAMHAVLDRNPHHGIHFRVLTKILRLSGGDHLHTGTVVGKLEGDREATLGWIDLLRESYIKEDRSRGIFFDQDWGSMPGVFAACSGGIHVWHMPALVTIFGEHAVLQFGGGTLGHPWGNAGAAANRVALEACVEARNEGHELEKEGKDILIQAAKHSPELKTAMETWKEIKFEFDTVDKLDVAHK.

The substrate site is built by asparagine 115 and threonine 165. The active-site Proton acceptor is the lysine 167. A substrate-binding site is contributed by lysine 169. Lysine 193, aspartate 195, and glutamate 196 together coordinate Mg(2+). Lysine 193 is modified (N6-carboxylysine). The active-site Proton acceptor is the histidine 286. Positions 287, 319, and 371 each coordinate substrate.

It belongs to the RuBisCO large chain family. Type I subfamily. In terms of assembly, heterohexadecamer of 8 large chains and 8 small chains. It depends on Mg(2+) as a cofactor.

It catalyses the reaction 2 (2R)-3-phosphoglycerate + 2 H(+) = D-ribulose 1,5-bisphosphate + CO2 + H2O. The enzyme catalyses D-ribulose 1,5-bisphosphate + O2 = 2-phosphoglycolate + (2R)-3-phosphoglycerate + 2 H(+). Its function is as follows. RuBisCO catalyzes two reactions: the carboxylation of D-ribulose 1,5-bisphosphate, the primary event in carbon dioxide fixation, as well as the oxidative fragmentation of the pentose substrate. Both reactions occur simultaneously and in competition at the same active site. In Alvinoconcha hessleri symbiotic bacterium, this protein is Ribulose bisphosphate carboxylase large chain.